The primary structure comprises 176 residues: Probable Brix domain-containing ribosomal biogenesis protein (176 aa).

The 171-residue stretch at 6-176 (IEIVFTSSRD…QLYDRNKNIN (171 aa)) folds into the Brix domain.

Its function is as follows. Probably involved in the biogenesis of the ribosome. The chain is Probable Brix domain-containing ribosomal biogenesis protein from Sulfurisphaera tokodaii (strain DSM 16993 / JCM 10545 / NBRC 100140 / 7) (Sulfolobus tokodaii).